The following is a 144-amino-acid chain: D-aminoacyl-tRNA deacylase (144 aa).

The Gly-cisPro motif, important for rejection of L-amino acids signature appears at 137-138 (GP).

This sequence belongs to the DTD family. Homodimer.

It localises to the cytoplasm. It catalyses the reaction glycyl-tRNA(Ala) + H2O = tRNA(Ala) + glycine + H(+). It carries out the reaction a D-aminoacyl-tRNA + H2O = a tRNA + a D-alpha-amino acid + H(+). An aminoacyl-tRNA editing enzyme that deacylates mischarged D-aminoacyl-tRNAs. Also deacylates mischarged glycyl-tRNA(Ala), protecting cells against glycine mischarging by AlaRS. Acts via tRNA-based rather than protein-based catalysis; rejects L-amino acids rather than detecting D-amino acids in the active site. By recycling D-aminoacyl-tRNA to D-amino acids and free tRNA molecules, this enzyme counteracts the toxicity associated with the formation of D-aminoacyl-tRNA entities in vivo and helps enforce protein L-homochirality. The polypeptide is D-aminoacyl-tRNA deacylase (Acinetobacter baumannii (strain SDF)).